Here is a 42-residue protein sequence, read N- to C-terminus: Beta-2-microglobulin (42 aa).

In terms of domain architecture, Ig-like C1-type spans 5 to 42 (PKIQVYSRHPAZBGKPBFLBCYVSGFHPXZIZIBLLKB).

In terms of assembly, heterodimer of an alpha chain and a beta chain. Beta-2-microglobulin is the beta-chain of major histocompatibility complex class I molecules.

It is found in the secreted. Its function is as follows. Component of the class I major histocompatibility complex (MHC). Involved in the presentation of peptide antigens to the immune system. This Canis lupus familiaris (Dog) protein is Beta-2-microglobulin (B2M).